The primary structure comprises 568 residues: Urocanate hydratase (568 aa).

NAD(+)-binding positions include 58 to 59, Q136, 182 to 184, E202, R207, 248 to 249, 269 to 273, 279 to 280, and Y328; these read GG, GMG, NA, QTSAH, and YL. C416 is a catalytic residue. G498 contacts NAD(+).

The protein belongs to the urocanase family. Requires NAD(+) as cofactor.

Its subcellular location is the cytoplasm. It carries out the reaction 4-imidazolone-5-propanoate = trans-urocanate + H2O. The protein operates within amino-acid degradation; L-histidine degradation into L-glutamate; N-formimidoyl-L-glutamate from L-histidine: step 2/3. Functionally, catalyzes the conversion of urocanate to 4-imidazolone-5-propionate. In Photobacterium profundum (strain SS9), this protein is Urocanate hydratase.